Here is a 44-residue protein sequence, read N- to C-terminus: Protein PsbN (44 aa).

A helical transmembrane segment spans residues 6-26; the sequence is FFFTIFLWFFLLSITAYSIYV.

The protein belongs to the PsbN family.

The protein resides in the plastid. The protein localises to the chloroplast thylakoid membrane. Its function is as follows. May play a role in photosystem I and II biogenesis. In Stigeoclonium helveticum (Green alga), this protein is Protein PsbN.